The sequence spans 837 residues: Protein translocase subunit SecA 1 (837 aa).

Residues Gln85, 103 to 107, and Asp492 contribute to the ATP site; that span reads GEGKT. Positions 787–806 are enriched in basic and acidic residues; it reads QEVAKGEAVHPKEDGEEPKK. The tract at residues 787–813 is disordered; the sequence is QEVAKGEAVHPKEDGEEPKKKPIRKAV. The Zn(2+) site is built by Cys821, Cys823, Cys832, and Cys833.

It belongs to the SecA family. In terms of assembly, monomer and homodimer. Part of the essential Sec protein translocation apparatus which comprises SecA, SecYEG and auxiliary proteins SecDF. Other proteins may also be involved. It depends on Zn(2+) as a cofactor.

It is found in the cell membrane. The protein localises to the cytoplasm. It carries out the reaction ATP + H2O + cellular proteinSide 1 = ADP + phosphate + cellular proteinSide 2.. Functionally, part of the Sec protein translocase complex. Interacts with the SecYEG preprotein conducting channel. Has a central role in coupling the hydrolysis of ATP to the transfer of proteins into and across the cell membrane, serving as an ATP-driven molecular motor driving the stepwise translocation of polypeptide chains across the membrane. The sequence is that of Protein translocase subunit SecA 1 from Geobacillus thermodenitrificans (strain NG80-2).